We begin with the raw amino-acid sequence, 296 residues long: SHSP domain-containing protein CPUR_05420 (296 aa).

The segment at 50 to 83 (AWQTCPQQRHPHQPDVSGPPGSGFGEQPSQDTPN) is disordered. In terms of domain architecture, sHSP spans 169–296 (ETKKSFTPDI…GKGVKEITIV (128 aa)).

Belongs to the small heat shock protein (HSP20) family.

Its function is as follows. Monooxygenase; part of the ergochrome gene cluster responsible for the typical purple-black color of the ergot sclerotia. The ergochrome gene cluster produces several ergot pigments including the yellow ergochrome secalonic acid and its derivatives, as well as the red anthraquinones endocrocin and clavorubin. The pathway begins with the synthesis of atrochrysone thioester by the polyketide synthase (PKS) CPUR_05437. The atrochrysone carboxyl ACP thioesterase CPUR_05436 then breaks the thioester bond and releases the atrochrysone carboxylic acid from CPUR_05437. The atrochrysone carboxylic acid is then converted to atrochrysone which is further transformed into emodin anthrone. The next step is performed by the anthrone oxygenase CPUR_05434 that catalyzes the oxidation of emodinanthrone to emodin. Emodin is further modified to yield monodictyphenone via several steps involving CPUR_05427, CPUR_05428, CPUR_05429 and CPUR_05430. The short chain dehydrogenase/reductase CPUR_05418 then catalyzes the C-5 ketoreduction to give the xanthone skeleton of the monomeric units. Ergochromes formation requires further dimerization steps of different xanthone units, probably catalyzed by the cytochrome P450 monooxygenase CPUR_05419. CPUR_05425, CPUR_05426 and CPUR_05431 are unique to Claviceps, thus it is likely that they are involved in further modification of xanthone units or in their dimerization. The yellow ergochromes and the red anthraquinone pigments endocrocin and clavorubin are products from the same PKS derived precursors and the latter are likely shunt products in the pathway of xanthone biosynthesis. It is proposed that atrochrysone carboxylic acid released from the PKS CPUR_05437 can also be converted to endocrocin anthrone which is further oxidized into endocrocin by CPUR_05435. Endocrocin could be then modified to clavorubin, possibly by CPUR_05423 and CPUR_05431. Clavorubin is the principal anthraquinone metabolite produced by the cluster with a much higher yield compared to endocrocin. In Claviceps purpurea (strain 20.1) (Ergot fungus), this protein is SHSP domain-containing protein CPUR_05420.